Here is a 369-residue protein sequence, read N- to C-terminus: Isocitrate dehydrogenase [NAD] subunit 2, mitochondrial (369 aa).

The N-terminal 15 residues, 1-15 (MLRNTFFRNTSRRFL), are a transit peptide targeting the mitochondrion. Thr105 carries the post-translational modification Phosphothreonine. Substrate contacts are provided by Arg119, Arg129, and Arg150. A Phosphothreonine modification is found at Thr153. Asp237 serves as a coordination point for substrate. Mg(2+) is bound by residues Asp237, Asp263, and Asp267. Phosphothreonine is present on residues Thr327 and Thr349.

This sequence belongs to the isocitrate and isopropylmalate dehydrogenases family. As to quaternary structure, octamer of two non-identical subunits IDH1 and IDH2. Mg(2+) is required as a cofactor. The cofactor is Mn(2+).

It is found in the mitochondrion matrix. It carries out the reaction D-threo-isocitrate + NAD(+) = 2-oxoglutarate + CO2 + NADH. Its activity is regulated as follows. Allosterically regulated by several compounds including AMP, NAD(+), and citrate. In terms of biological role, performs an essential role in the oxidative function of the citric acid cycle. Also binds RNA; specifically to the 5'-untranslated leaders of mitochondrial mRNAs. The protein is Isocitrate dehydrogenase [NAD] subunit 2, mitochondrial (IDH2) of Saccharomyces cerevisiae (strain ATCC 204508 / S288c) (Baker's yeast).